A 236-amino-acid polypeptide reads, in one-letter code: Ribonuclease 3 (236 aa).

One can recognise an RNase III domain in the interval 6-140 (FLDFLKQNRI…FIGAVAQDQG (135 aa)). Glu46 contacts Mg(2+). Asp50 is a catalytic residue. 2 residues coordinate Mg(2+): Asp126 and Glu129. Glu129 is an active-site residue. Residues 166–231 (DYKTIFQEQA…AKNAILKLDD (66 aa)) form the DRBM domain.

Belongs to the ribonuclease III family. As to quaternary structure, homodimer. The cofactor is Mg(2+).

It localises to the cytoplasm. It carries out the reaction Endonucleolytic cleavage to 5'-phosphomonoester.. Its function is as follows. Digests double-stranded RNA. Involved in the processing of primary rRNA transcript to yield the immediate precursors to the large and small rRNAs (23S and 16S). Processes some mRNAs, and tRNAs when they are encoded in the rRNA operon. Processes pre-crRNA and tracrRNA of type II CRISPR loci if present in the organism. This is Ribonuclease 3 from Ureaplasma parvum serovar 3 (strain ATCC 700970).